Reading from the N-terminus, the 545-residue chain is Probable protein kinase UbiB (545 aa).

The region spanning 123-501 (DFDIVPLASA…RVRQHQSHYL (379 aa)) is the Protein kinase domain. Residues 129-137 (LASASIAQV) and K152 each bind ATP. Catalysis depends on D287, which acts as the Proton acceptor. The next 2 membrane-spanning stretches (helical) occupy residues 498–518 (SHYL…VVLS) and 521–541 (EWDG…LVGW).

This sequence belongs to the ABC1 family. UbiB subfamily.

It localises to the cell inner membrane. The protein operates within cofactor biosynthesis; ubiquinone biosynthesis [regulation]. Its function is as follows. Is probably a protein kinase regulator of UbiI activity which is involved in aerobic coenzyme Q (ubiquinone) biosynthesis. The chain is Probable protein kinase UbiB from Erwinia tasmaniensis (strain DSM 17950 / CFBP 7177 / CIP 109463 / NCPPB 4357 / Et1/99).